We begin with the raw amino-acid sequence, 770 residues long: Low-density lipoprotein receptor-related protein 3 (770 aa).

A signal peptide spans 1–36 (MEKRAAAGPEGAPGARAPLAVVCLVNLFLTGRLSSA). Topologically, residues 37 to 496 (VPALAACSGK…HGCLAAVPRK (460 aa)) are extracellular. Cystine bridges form between Cys43-Cys72, Cys99-Cys120, Cys166-Cys178, Cys173-Cys191, Cys185-Cys200, Cys212-Cys227, Cys219-Cys240, Cys234-Cys249, and Cys254-Cys282. The CUB 1 domain occupies 43 to 159 (CSGKLEQHTE…QGFRLSYIRG (117 aa)). N-linked (GlcNAc...) asparagine glycosylation occurs at Asn71. 2 LDL-receptor class A domains span residues 165 to 201 (SCQT…GNCS) and 211 to 250 (LCPG…AGCP). Asn199 carries N-linked (GlcNAc...) asparagine glycosylation. In terms of domain architecture, CUB 2 spans 254-365 (CGRRLGSFYG…HGFNATYQVK (112 aa)). The N-linked (GlcNAc...) asparagine glycan is linked to Asn359. 2 consecutive LDL-receptor class A domains span residues 415 to 453 (ACPP…KNCF) and 454 to 490 (SCQP…HGCL). Disulfide bonds link Cys416/Cys430, Cys423/Cys443, Cys437/Cys452, Cys455/Cys467, Cys462/Cys480, and Cys474/Cys489. The helical transmembrane segment at 497–517 (VITAALIGSLVCGLLLVIALG) threads the bilayer. At 518–770 (CAFKLYSLRT…ASDDEALLVC (253 aa)) the chain is on the cytoplasmic side. Residues 639 to 753 (LLQAAPGPVP…PLGVCRSPPP (115 aa)) are disordered. Basic and acidic residues predominate over residues 689-703 (RDPEYRPEDKERKAC).

This sequence belongs to the LDLR family. In terms of assembly, binds GGA1 and GGA2.

The protein localises to the membrane. It is found in the coated pit. In terms of biological role, probable receptor, which may be involved in the internalization of lipophilic molecules and/or signal transduction. Its precise role is however unclear, since it does not bind to very low density lipoprotein (VLDL) or to LRPAP1 in vitro. The protein is Low-density lipoprotein receptor-related protein 3 (Lrp3) of Rattus norvegicus (Rat).